Consider the following 149-residue polypeptide: uncharacterized protein (149 aa).

This is an uncharacterized protein from Schizosaccharomyces pombe (strain 972 / ATCC 24843) (Fission yeast).